The primary structure comprises 312 residues: Protein-methionine-sulfoxide reductase catalytic subunit MsrP (312 aa).

A signal peptide (tat-type signal) is located at residues 1–45 (MPVYRPPRIAASEITPERFFLDRRSFLAAAGGLVLGGTGMAHAAA). Mo-molybdopterin contacts are provided by residues Asn69, 72–73 (YE), Cys126, Thr161, Asn211, Arg216, and 227–229 (GIK).

It belongs to the MsrP family. Heterodimer of a catalytic subunit (MsrP) and a heme-binding subunit (MsrQ). Mo-molybdopterin is required as a cofactor. In terms of processing, predicted to be exported by the Tat system. The position of the signal peptide cleavage has not been experimentally proven.

The protein resides in the periplasm. It catalyses the reaction L-methionyl-[protein] + a quinone + H2O = L-methionyl-(S)-S-oxide-[protein] + a quinol. The enzyme catalyses L-methionyl-[protein] + a quinone + H2O = L-methionyl-(R)-S-oxide-[protein] + a quinol. Functionally, part of the MsrPQ system that repairs oxidized periplasmic proteins containing methionine sulfoxide residues (Met-O), using respiratory chain electrons. Thus protects these proteins from oxidative-stress damage caused by reactive species of oxygen and chlorine generated by the host defense mechanisms. MsrPQ is essential for the maintenance of envelope integrity under bleach stress, rescuing a wide series of structurally unrelated periplasmic proteins from methionine oxidation. The catalytic subunit MsrP is non-stereospecific, being able to reduce both (R-) and (S-) diastereoisomers of methionine sulfoxide. In Sinorhizobium fredii (strain NBRC 101917 / NGR234), this protein is Protein-methionine-sulfoxide reductase catalytic subunit MsrP.